Reading from the N-terminus, the 384-residue chain is Beta-ureidopropionase (384 aa).

Residues valine 72–leucine 344 form the CN hydrolase domain. Glutamate 119 serves as the catalytic Proton acceptor. Lysine 196 functions as the Proton donor in the catalytic mechanism. Catalysis depends on cysteine 233, which acts as the Nucleophile. Phosphoserine is present on serine 378.

The protein belongs to the carbon-nitrogen hydrolase superfamily. BUP family. In terms of assembly, homodimer, homotetramer, homooctamer; can also form higher homooligomers. Detected in liver (at protein level).

It localises to the cytoplasm. The enzyme catalyses 3-(carbamoylamino)propanoate + H2O + 2 H(+) = beta-alanine + NH4(+) + CO2. It carries out the reaction 3-(carbamoylamino)-2-methylpropanoate + H2O + 2 H(+) = (R)-3-amino-2-methylpropanoate + NH4(+) + CO2. Its pathway is amino-acid biosynthesis; beta-alanine biosynthesis. Strongly inhibited by 50 mM Zn(2+). Not inhibited by EDTA. Competitively inhibited by beta-alanine, 5-aminolevulinic acid (ALA), beta-aminoisobutyrate and 4-ureidobutyrate. Its function is as follows. Catalyzes a late step in pyrimidine degradation. Converts N-carbamoyl-beta-alanine (3-ureidopropanoate) into beta-alanine, ammonia and carbon dioxide. Likewise, converts N-carbamoyl-beta-aminoisobutyrate (3-ureidoisobutyrate) into beta-aminoisobutyrate, ammonia and carbon dioxide. This Homo sapiens (Human) protein is Beta-ureidopropionase (UPB1).